A 4158-amino-acid chain; its full sequence is Dynein axonemal heavy chain 6 (4158 aa).

The stem stretch occupies residues 1-1433; the sequence is MTFRATDSEF…VARMALSQYT (1433 aa). 192–199 lines the ATP pocket; that stretch reads IIRENEHL. A coiled-coil region spans residues 805-859; sequence CVHLGSDLEELNNEVNEVKLQAQDPQILDISADQDKIRLILNNLQSVLADLQKRA. AAA stretches follow at residues 1434–1655, 1715–1948, 2058–2306, and 2408–2659; these read YGYE…VLVM, STIV…KKCS, KYNR…CVQG, and DYNL…LRRR. ATP-binding positions include 1472-1479, 1753-1760, 2096-2103, and 2447-2454; these read GPAGTGKT, GPTGGGKT, GITGVGKS, and GVGGTGKQ. Residues 2676 to 2961 form a stalk region; the sequence is SMLSEKRKQI…KTMALTKARL (286 aa). The stretch at 2901-2996 forms a coiled coil; that stretch reads KRQKLRAAQA…EEISNITGNV (96 aa). AAA regions lie at residues 3042-3272 and 3509-3730; these read LGDP…AIKT and LTDF…NLKL.

The protein belongs to the dynein heavy chain family. As to quaternary structure, the dynein complex consists of at least two heavy chains and a number of intermediate and light chains. As to expression, expressed in several tissues, including brain, pituitary, testis and trachea, with highest levels in testis.

Its subcellular location is the cytoplasm. The protein localises to the cytoskeleton. It is found in the cilium axoneme. Its function is as follows. Force generating protein of respiratory cilia. Produces force towards the minus ends of microtubules. Dynein has ATPase activity; the force-producing power stroke is thought to occur on release of ADP. This chain is Dynein axonemal heavy chain 6, found in Homo sapiens (Human).